A 369-amino-acid chain; its full sequence is 3,4-dihydroxy-2-butanone 4-phosphate synthase (369 aa).

The interval 1-201 (MAFDRIEDII…IADLIHYRLS (201 aa)) is DHBP synthase. D-ribulose 5-phosphate contacts are provided by residues 27–28 (RE), D32, 140–144 (RAGHT), and E164. E28 is a Mg(2+) binding site. H143 is a Mg(2+) binding site. Residues 202–369 (TEHTIVRIGE…EVIESIPFPG (168 aa)) are GTP cyclohydrolase II-like.

This sequence in the N-terminal section; belongs to the DHBP synthase family. The protein in the C-terminal section; belongs to the GTP cyclohydrolase II family. Mg(2+) is required as a cofactor. The cofactor is Mn(2+).

It catalyses the reaction D-ribulose 5-phosphate = (2S)-2-hydroxy-3-oxobutyl phosphate + formate + H(+). Its pathway is cofactor biosynthesis; riboflavin biosynthesis; 2-hydroxy-3-oxobutyl phosphate from D-ribulose 5-phosphate: step 1/1. Functionally, catalyzes the conversion of D-ribulose 5-phosphate to formate and 3,4-dihydroxy-2-butanone 4-phosphate. In Pseudomonas syringae pv. tomato (strain ATCC BAA-871 / DC3000), this protein is 3,4-dihydroxy-2-butanone 4-phosphate synthase (ribB).